We begin with the raw amino-acid sequence, 414 residues long: MIDLKYLQNNFNEVSMKLQKKGVDAASLEHLQTLFKTLKEANAKLEAAKAEQNSMSKLFGQYKREGKDITELKAKVDANKEAMVPLQEAAREAEEALYAVALAIPNLPDDSVPEGADEEDNVELIKVLEPRSFDFEPKEHWDLAEKNGWIDFERGVKLAKSRFSVLRGDAARLERALINFFLDTNRERGFEEFCVPFMNNAAMLQGTGQLPKFEDDLFKIEDEDLYLIPTAEVPLTNMYHDEILAEIDLPVLMTGYTPCFRKEAGSAGRDTRGMIRQHQFDKVEMVAIAHPDNSDEVFDMMVQNASDILTALGLPHRVVELCGGDLGFSAAKTIDLEVWLPGQNKYREISSISNTRDFQARRAKIRFKDGKKNRLVHTLNGSALAVGRTLIAIMENYQNEDGTIEIPEVLKKYM.

Residue 230–232 (TAE) participates in L-serine binding. An ATP-binding site is contributed by 261–263 (RKE). Residue E284 participates in L-serine binding. ATP is bound at residue 348 to 351 (EISS). Residue S382 participates in L-serine binding.

The protein belongs to the class-II aminoacyl-tRNA synthetase family. Type-1 seryl-tRNA synthetase subfamily. As to quaternary structure, homodimer. The tRNA molecule binds across the dimer.

It localises to the cytoplasm. It catalyses the reaction tRNA(Ser) + L-serine + ATP = L-seryl-tRNA(Ser) + AMP + diphosphate + H(+). The enzyme catalyses tRNA(Sec) + L-serine + ATP = L-seryl-tRNA(Sec) + AMP + diphosphate + H(+). It functions in the pathway aminoacyl-tRNA biosynthesis; selenocysteinyl-tRNA(Sec) biosynthesis; L-seryl-tRNA(Sec) from L-serine and tRNA(Sec): step 1/1. Its function is as follows. Catalyzes the attachment of serine to tRNA(Ser). Is also able to aminoacylate tRNA(Sec) with serine, to form the misacylated tRNA L-seryl-tRNA(Sec), which will be further converted into selenocysteinyl-tRNA(Sec). This is Serine--tRNA ligase from Sulfurovum sp. (strain NBC37-1).